The primary structure comprises 384 residues: Carbamoyl phosphate synthase small chain (384 aa).

A CPSase region spans residues 1-195 (MLPVLPPALL…LGRGHGTLAD (195 aa)). The L-glutamine site is built by serine 50, glycine 247, and glycine 249. The Glutamine amidotransferase type-1 domain occupies 199–384 (HVVAYDFGVK…RFVALMQERA (186 aa)). Catalysis depends on cysteine 275, which acts as the Nucleophile. Positions 276, 279, 317, 319, and 320 each coordinate L-glutamine. Catalysis depends on residues histidine 359 and glutamate 361.

Belongs to the CarA family. As to quaternary structure, composed of two chains; the small (or glutamine) chain promotes the hydrolysis of glutamine to ammonia, which is used by the large (or ammonia) chain to synthesize carbamoyl phosphate. Tetramer of heterodimers (alpha,beta)4.

The enzyme catalyses hydrogencarbonate + L-glutamine + 2 ATP + H2O = carbamoyl phosphate + L-glutamate + 2 ADP + phosphate + 2 H(+). The catalysed reaction is L-glutamine + H2O = L-glutamate + NH4(+). Its pathway is amino-acid biosynthesis; L-arginine biosynthesis; carbamoyl phosphate from bicarbonate: step 1/1. It participates in pyrimidine metabolism; UMP biosynthesis via de novo pathway; (S)-dihydroorotate from bicarbonate: step 1/3. Small subunit of the glutamine-dependent carbamoyl phosphate synthetase (CPSase). CPSase catalyzes the formation of carbamoyl phosphate from the ammonia moiety of glutamine, carbonate, and phosphate donated by ATP, constituting the first step of 2 biosynthetic pathways, one leading to arginine and/or urea and the other to pyrimidine nucleotides. The small subunit (glutamine amidotransferase) binds and cleaves glutamine to supply the large subunit with the substrate ammonia. This chain is Carbamoyl phosphate synthase small chain, found in Rubrivivax gelatinosus (strain NBRC 100245 / IL144).